Here is a 735-residue protein sequence, read N- to C-terminus: Transcription factor sphG (735 aa).

The segment at residues 13-40 (CDQCRARKIRCSREKPSCRNCGRLGLQC) is a DNA-binding region (zn(2)-C6 fungal-type). Positions 89 to 110 (TISPSARCPASPASPSPRLSDK) are disordered. A compositionally biased stretch (low complexity) spans 91–106 (SPSARCPASPASPSPR).

The protein localises to the nucleus. Its function is as follows. Transcription factor that regulates the expression of the gene cluster that mediates the biosynthesis of sphingofungins, bioactive molecules acting as sphingolipid inhibitors via inhibiting serine palmitoyl transferase (SPT). This Aspergillus fumigatus (strain CBS 144.89 / FGSC A1163 / CEA10) (Neosartorya fumigata) protein is Transcription factor sphG.